The following is a 312-amino-acid chain: Putative endonuclease 4 (312 aa).

Zn(2+)-binding residues include H84, H127, E166, D202, H205, H239, D252, H254, and E284.

Belongs to the AP endonuclease 2 family. It depends on Zn(2+) as a cofactor.

The catalysed reaction is Endonucleolytic cleavage to 5'-phosphooligonucleotide end-products.. Functionally, endonuclease IV plays a role in DNA repair. It cleaves phosphodiester bonds at apurinic or apyrimidinic sites (AP sites) to produce new 5'-ends that are base-free deoxyribose 5-phosphate residues. In Acanthamoeba polyphaga (Amoeba), this protein is Putative endonuclease 4.